The sequence spans 88 residues: Long neurotoxin LNTX-2 (88 aa).

The N-terminal stretch at 1 to 21 (MKTLLLTLVVVTIVCLDFGYA) is a signal peptide. 4 disulfides stabilise this stretch: Cys24–Cys42, Cys35–Cys63, Cys67–Cys78, and Cys79–Cys84.

This sequence belongs to the three-finger toxin family. Long-chain subfamily. Type II alpha-neurotoxin sub-subfamily. Expressed by the venom gland.

Its subcellular location is the secreted. Functionally, binds with high affinity to muscular nicotinic acetylcholine receptors (nAChRs), whereas it binds with a low affinity to neuronal alpha-7/CHRNA7 nAChRs. The sequence is that of Long neurotoxin LNTX-2 from Demansia vestigiata (Lesser black whip snake).